The following is a 682-amino-acid chain: MTTQPRKILVTCALPYANGAIHLGHMLEHIQADIWVRFQRMRGNKIHFVCADDAHGTPIMLNADKLGITPEELIAKAKADHMRDFAGFNISFDNYHSTHSEENKQLTAEIYNKLKANGFIKSKVISQLFDPEKNMFLPDRFVKGTCPKCKAEDQYGDNCEVCASTYSPMDLINPRSAVSGTTPIVKESEHFFFDLPAFEGMLKEWTRSGSLQSEIANKMQEWFESGLQQWDISRDTPYFGFEIPGVKDKFFYVWLDAPIGYMASFKNLCNREGIDFNEFWAEGSDAELYHFIGKDIVYFHSLFWPAMLEGSGYRKPTNVFAHGYVTVDGAKMSKSRGTFIQASTYLNHIDPECLRYYYAAKLNDRIEDLDFNLEDFVQRVNTDIVNKLVNLASRNAGFIAKRFEGKLADKLEDEALFAEFTAQAEQIAAYYESREYNKAIREIMALTDKANKYIDEKAPWVIAKEEGKEAELQAVCSMGIELFRVLMSYLKPVLPKLAERAETFLQAELRWDNIHQPLLGHTLAPFKALFSRLEKKQIDAVVEETKALFAAANKAAEKTEAKPTALSTVEPIAETITIDDFAKLDMRVAKVLKCEAVPESNKLLRFELDLGDHTRQVFSSIKAAYNKPEELEGRFVIMVANLAPRKMKFGVSEGMILSAGTGGSDLFLLSADSGVTAGMQVK.

Residues 15-25 (PYANGAIHLGH) carry the 'HIGH' region motif. Positions 146, 149, 159, and 162 each coordinate Zn(2+). The 'KMSKS' region motif lies at 331 to 335 (KMSKS). Lysine 334 is a binding site for ATP. The tRNA-binding domain occupies 580 to 682 (DFAKLDMRVA…SGVTAGMQVK (103 aa)).

Belongs to the class-I aminoacyl-tRNA synthetase family. MetG type 1 subfamily. As to quaternary structure, homodimer. It depends on Zn(2+) as a cofactor.

The protein localises to the cytoplasm. It catalyses the reaction tRNA(Met) + L-methionine + ATP = L-methionyl-tRNA(Met) + AMP + diphosphate. Functionally, is required not only for elongation of protein synthesis but also for the initiation of all mRNA translation through initiator tRNA(fMet) aminoacylation. This chain is Methionine--tRNA ligase, found in Haemophilus influenzae (strain PittEE).